Consider the following 127-residue polypeptide: Small ribosomal subunit protein uS13 (127 aa).

Residues Leu-96–Lys-127 are disordered. Basic residues predominate over residues Arg-108 to Lys-127.

It belongs to the universal ribosomal protein uS13 family. In terms of assembly, part of the 30S ribosomal subunit. Forms a loose heterodimer with protein S19. Forms two bridges to the 50S subunit in the 70S ribosome.

Located at the top of the head of the 30S subunit, it contacts several helices of the 16S rRNA. In the 70S ribosome it contacts the 23S rRNA (bridge B1a) and protein L5 of the 50S subunit (bridge B1b), connecting the 2 subunits; these bridges are implicated in subunit movement. Contacts the tRNAs in the A and P-sites. The protein is Small ribosomal subunit protein uS13 of Desulfosudis oleivorans (strain DSM 6200 / JCM 39069 / Hxd3) (Desulfococcus oleovorans).